A 275-amino-acid polypeptide reads, in one-letter code: Elongation factor Ts (275 aa).

Residues 80-83 form an involved in Mg(2+) ion dislocation from EF-Tu region; sequence TDFV.

Belongs to the EF-Ts family.

It localises to the cytoplasm. In terms of biological role, associates with the EF-Tu.GDP complex and induces the exchange of GDP to GTP. It remains bound to the aminoacyl-tRNA.EF-Tu.GTP complex up to the GTP hydrolysis stage on the ribosome. The chain is Elongation factor Ts from Clavibacter michiganensis subsp. michiganensis (strain NCPPB 382).